Consider the following 601-residue polypeptide: MKHWIQENYKNRSWAGELNESQEGKQIVLFGWSFRFRDQGGVIFIDLRDRTGIIQVVARKELLGDSFTLAEKVRSEYVLAVRGTLKKRDLESINPRMQTGTIEVVLDQLEILNVAKTPPFSLDEFDEVSEELKLKYRYLDFRREELKNRMIKRHEFIFAIRNYLNKRKFVEIETPILNKSTPEGARDFLVPSRLNPNQFYALPQSPQIFKQILMVGGMERYFQIVKCFRDEDLRADRQPEFTQLDMEFSFVSQEEILSEIEGLVETIYKEVFNIQLSIPFPRMTYNTAMEEYGSDKPDLRFGMKLVDVSEIVKDCDFNVFAGAVKNGGTVKVVCVPGGSIISRKEIEDYTAWLNRDYKAKGLAYMKHGTEGLESTITKRFKKEELEAISKACGSKEGDMLFFGADEREIVNHSLGALRLKLSERFETPKENEINITWIVDFPMFEWNKDHKRWDALHHPFTSPSDESIPFFESMETLQKNAGNATAKAYDLVMNGVEIGGGSIRIHSKEIQNKVFQVLGINEEEAKEKFGFLLEALEFGAPPHGGLAFGIDRMLMLLTGGKSIRDVIAFPKTQKGLCLMSECPSPVEEKQLQELKIKLAKV.

Glu183 provides a ligand contact to L-aspartate. Positions 207-210 are aspartate; the sequence is QIFK. An L-aspartate-binding site is contributed by Arg229. ATP is bound by residues 229-231 and Gln238; that span reads RDE. His457 contacts L-aspartate. Glu497 contacts ATP. Arg504 contributes to the L-aspartate binding site. Residue 549–552 coordinates ATP; it reads GIDR.

Belongs to the class-II aminoacyl-tRNA synthetase family. Type 1 subfamily. In terms of assembly, homodimer.

The protein resides in the cytoplasm. It carries out the reaction tRNA(Asp) + L-aspartate + ATP = L-aspartyl-tRNA(Asp) + AMP + diphosphate. Its function is as follows. Catalyzes the attachment of L-aspartate to tRNA(Asp) in a two-step reaction: L-aspartate is first activated by ATP to form Asp-AMP and then transferred to the acceptor end of tRNA(Asp). The protein is Aspartate--tRNA ligase of Leptospira interrogans serogroup Icterohaemorrhagiae serovar copenhageni (strain Fiocruz L1-130).